Here is a 581-residue protein sequence, read N- to C-terminus: NADH-quinone oxidoreductase subunit C/D (581 aa).

The tract at residues 1–172 (MSATDLVSEL…PLFNMTAALF (172 aa)) is NADH dehydrogenase I subunit C. The tract at residues 196–581 (ELMILNYGPH…IDYVMSDVDR (386 aa)) is NADH dehydrogenase I subunit D.

This sequence in the N-terminal section; belongs to the complex I 30 kDa subunit family. It in the C-terminal section; belongs to the complex I 49 kDa subunit family. As to quaternary structure, NDH-1 is composed of 13 different subunits. Subunits NuoB, CD, E, F, and G constitute the peripheral sector of the complex.

It localises to the cell inner membrane. It catalyses the reaction a quinone + NADH + 5 H(+)(in) = a quinol + NAD(+) + 4 H(+)(out). NDH-1 shuttles electrons from NADH, via FMN and iron-sulfur (Fe-S) centers, to quinones in the respiratory chain. The immediate electron acceptor for the enzyme in this species is believed to be ubiquinone. Couples the redox reaction to proton translocation (for every two electrons transferred, four hydrogen ions are translocated across the cytoplasmic membrane), and thus conserves the redox energy in a proton gradient. This chain is NADH-quinone oxidoreductase subunit C/D, found in Rhodopseudomonas palustris (strain HaA2).